A 334-amino-acid polypeptide reads, in one-letter code: Protein-methionine-sulfoxide reductase catalytic subunit MsrP (334 aa).

Positions 1–44 form a signal peptide, tat-type signal; it reads MKKNQFLKESDVTAESVFFMKRRQVLKALGISAAALSLPHAAHA. Residues N88, 91-92, C146, T181, N233, R238, and 249-251 each bind Mo-molybdopterin; these read YE and GIK.

The protein belongs to the MsrP family. As to quaternary structure, heterodimer of a catalytic subunit (MsrP) and a heme-binding subunit (MsrQ). Requires Mo-molybdopterin as cofactor. Post-translationally, predicted to be exported by the Tat system. The position of the signal peptide cleavage has not been experimentally proven.

It localises to the periplasm. The enzyme catalyses L-methionyl-[protein] + a quinone + H2O = L-methionyl-(S)-S-oxide-[protein] + a quinol. The catalysed reaction is L-methionyl-[protein] + a quinone + H2O = L-methionyl-(R)-S-oxide-[protein] + a quinol. Functionally, part of the MsrPQ system that repairs oxidized periplasmic proteins containing methionine sulfoxide residues (Met-O), using respiratory chain electrons. Thus protects these proteins from oxidative-stress damage caused by reactive species of oxygen and chlorine generated by the host defense mechanisms. MsrPQ is essential for the maintenance of envelope integrity under bleach stress, rescuing a wide series of structurally unrelated periplasmic proteins from methionine oxidation, including the primary periplasmic chaperone SurA and the lipoprotein Pal. The catalytic subunit MsrP is non-stereospecific, being able to reduce both (R-) and (S-) diastereoisomers of methionine sulfoxide. The sequence is that of Protein-methionine-sulfoxide reductase catalytic subunit MsrP from Escherichia coli O127:H6 (strain E2348/69 / EPEC).